Here is a 375-residue protein sequence, read N- to C-terminus: MKAVGLVVEYNPFHNGHRYHLAQAKRLTGADVVVAVMSGDFTQRGEPTILDKWSRTLAALQNGVDLVVELPVADAVQPAHRFAMGALSLLNDLQVADVVFGAEHPDWDFAAMVKAEQDFNQAAFHQFNNTYATQFNQQLEAVTGHALTDPNDILAFAYHRAKAAGDFGFHLQPIQRVDNHYADQQLTGAISSAGAIRQAVKGHQDVTETVPVQTASALAKLTTIPNWEQLYPLLANHLIQTPAPLLEQTYQVKEGLENRLKEAAERHRDFTSFLKAVKTKRYTYGRLMRVAFYLTLNLSDQDMANYHPYHRVLGFTAAGQAYLHQVKKELSYPLITKVNQRMKNAELALDYRAGKLYQFFGTPEQDLTRGPIRLV.

ATP contacts are provided by residues 7–20, Gly-101, Asn-151, and Arg-176; that span reads VVEY…HRYH.

It belongs to the TmcAL family.

The protein localises to the cytoplasm. It carries out the reaction cytidine(34) in elongator tRNA(Met) + acetate + ATP = N(4)-acetylcytidine(34) in elongator tRNA(Met) + AMP + diphosphate. Catalyzes the formation of N(4)-acetylcytidine (ac(4)C) at the wobble position of elongator tRNA(Met), using acetate and ATP as substrates. First activates an acetate ion to form acetyladenylate (Ac-AMP) and then transfers the acetyl group to tRNA to form ac(4)C34. The chain is tRNA(Met) cytidine acetate ligase from Limosilactobacillus fermentum (strain NBRC 3956 / LMG 18251) (Lactobacillus fermentum).